The following is a 426-amino-acid chain: 3-phosphoshikimate 1-carboxyvinyltransferase (426 aa).

Residues Lys22, Ser23, and Arg27 each coordinate 3-phosphoshikimate. Lys22 provides a ligand contact to phosphoenolpyruvate. Phosphoenolpyruvate contacts are provided by Gly96 and Arg124. 3-phosphoshikimate-binding residues include Ser170, Ser171, Gln172, Ser198, Asp314, Asn337, and Lys341. Gln172 lines the phosphoenolpyruvate pocket. Residue Asp314 is the Proton acceptor of the active site. Arg345, Arg387, and Lys412 together coordinate phosphoenolpyruvate.

It belongs to the EPSP synthase family. Monomer.

Its subcellular location is the cytoplasm. The catalysed reaction is 3-phosphoshikimate + phosphoenolpyruvate = 5-O-(1-carboxyvinyl)-3-phosphoshikimate + phosphate. It functions in the pathway metabolic intermediate biosynthesis; chorismate biosynthesis; chorismate from D-erythrose 4-phosphate and phosphoenolpyruvate: step 6/7. Functionally, catalyzes the transfer of the enolpyruvyl moiety of phosphoenolpyruvate (PEP) to the 5-hydroxyl of shikimate-3-phosphate (S3P) to produce enolpyruvyl shikimate-3-phosphate and inorganic phosphate. This is 3-phosphoshikimate 1-carboxyvinyltransferase from Aliivibrio fischeri (strain MJ11) (Vibrio fischeri).